The following is a 105-amino-acid chain: uncharacterized protein (105 aa).

3 helical membrane-spanning segments follow: residues 3-23 (ISPL…QALF), 41-61 (DLVN…ALVS), and 63-83 (AFPV…TFIY).

It localises to the cell membrane. This is an uncharacterized protein from Methanocaldococcus jannaschii (strain ATCC 43067 / DSM 2661 / JAL-1 / JCM 10045 / NBRC 100440) (Methanococcus jannaschii).